The primary structure comprises 272 residues: MGESYRIVLRTYAKLNLCLDVLGKRQDGYHEINSLFQNISLFDEMDITLSDGKGKLLINSNVNIGNNILNSVWELVNCDNKNVYVNLQKNIPMGGGLGGGSSNAAGFIIALEKVGIISKEQSLKIAQKVGSDVPFFLFGGTAIVKGRGEVILPVEPLTNFGKFKVDLHLPNFSISTKEAYSKLKAEWFGKAPITPEELYDFYKTRNFEMIKKGTYNIFERVIPMDLLEKIESLRRDFPAALTGSGSTYFALKEDGKYSFVPKGVEINAFEKS.

The active site involves Lys-14. 92-102 (PMGGGLGGGSS) serves as a coordination point for ATP. Asp-132 is an active-site residue.

The protein belongs to the GHMP kinase family. IspE subfamily.

It catalyses the reaction 4-CDP-2-C-methyl-D-erythritol + ATP = 4-CDP-2-C-methyl-D-erythritol 2-phosphate + ADP + H(+). It participates in isoprenoid biosynthesis; isopentenyl diphosphate biosynthesis via DXP pathway; isopentenyl diphosphate from 1-deoxy-D-xylulose 5-phosphate: step 3/6. Its function is as follows. Catalyzes the phosphorylation of the position 2 hydroxy group of 4-diphosphocytidyl-2C-methyl-D-erythritol. This chain is 4-diphosphocytidyl-2-C-methyl-D-erythritol kinase, found in Fervidobacterium nodosum (strain ATCC 35602 / DSM 5306 / Rt17-B1).